We begin with the raw amino-acid sequence, 359 residues long: MKKYLALALIAPLLISCSTTKKGDTYNEAWVKDTNGFDILMGQFAHNIENIWGFKEVVIAGPKDYVKYTDQYQTRSHINFDDGTITIETIAGTEPAAHLRRAIIKTLLMGDDPSSVDLYSDVDDITISKEPFLYGQVVDNTGQPIRWEGRASNFADYLLKNRLQSRSNGLRIIYSVTINMVPNHLDKRAHKYLGMVRQASRKYGVDESLILAIMQTESSFNPYAVSRSDALGLMQVVQHTAGKDVFRSQGKSGTPSRSFLFDPASNIDTGTAYLAMLNNVYLDGIDNPTSRRYAVITAYNGGAGSVLRVFSNDKIQAANIINTMTPGDVYQTLTTRHPSAESRRYLYKVNTAQKSYRRR.

Positions 1–16 are cleaved as a signal peptide; the sequence is MKKYLALALIAPLLIS. Cys-17 carries the N-palmitoyl cysteine lipid modification. A lipid anchor (S-diacylglycerol cysteine) is attached at Cys-17.

This sequence belongs to the transglycosylase Slt family.

The protein localises to the cell outer membrane. The catalysed reaction is Exolytic cleavage of the (1-&gt;4)-beta-glycosidic linkage between N-acetylmuramic acid (MurNAc) and N-acetylglucosamine (GlcNAc) residues in peptidoglycan, from either the reducing or the non-reducing ends of the peptidoglycan chains, with concomitant formation of a 1,6-anhydrobond in the MurNAc residue.. Functionally, murein-degrading enzyme. May play a role in recycling of muropeptides during cell elongation and/or cell division. In Shigella sonnei (strain Ss046), this protein is Membrane-bound lytic murein transglycosylase C.